Reading from the N-terminus, the 678-residue chain is Zinc finger protein 334 (678 aa).

The region spanning 8–79 is the KRAB domain; the sequence is VSFQDLTVNF…EEFSNQNYPE (72 aa). 14 C2H2-type zinc fingers span residues 235-257, 263-285, 291-313, 319-341, 347-369, 375-397, 403-425, 431-453, 459-481, 542-564, 570-592, 598-620, 626-648, and 654-676; these read NEPC…QRIH, YVCN…QRIH, YECS…QKIH, YECN…FRSH, YECK…QRTH, NECK…QRIH, YECS…RRSH, YECS…QITH, YECN…QRTH, YERN…RRIH, YECN…QKIH, and YECN…QKSH.

It belongs to the krueppel C2H2-type zinc-finger protein family.

The protein resides in the nucleus. May be involved in transcriptional regulation. This chain is Zinc finger protein 334 (ZNF334), found in Pongo abelii (Sumatran orangutan).